The sequence spans 231 residues: MATNTPTEPGGDLALLGLMQLVSPALPIGAFAWSQGLESAFELGWVNNEAELAQWIEGVLEDGLSRCELPLLARLQTAWANDDGATIAHWNQWLHATRETAELSDEDTRLGGALKTLLGNLNLLPDQTLIPAEPGYITLFAWAAQVRRVPVRQTLLGFAWAWLENQLAVACKALPLGHTAAQRIIEQLRPALVNATDQALARQDHELGPILPGLALGSALHETQYSRLFRS.

Belongs to the UreF family. UreD, UreF and UreG form a complex that acts as a GTP-hydrolysis-dependent molecular chaperone, activating the urease apoprotein by helping to assemble the nickel containing metallocenter of UreC. The UreE protein probably delivers the nickel.

It localises to the cytoplasm. Functionally, required for maturation of urease via the functional incorporation of the urease nickel metallocenter. This Marinobacter nauticus (strain ATCC 700491 / DSM 11845 / VT8) (Marinobacter aquaeolei) protein is Urease accessory protein UreF.